We begin with the raw amino-acid sequence, 122 residues long: Ribosomal silencing factor RsfS (122 aa).

This sequence belongs to the Iojap/RsfS family. As to quaternary structure, interacts with ribosomal protein uL14 (rplN).

The protein localises to the cytoplasm. Functions as a ribosomal silencing factor. Interacts with ribosomal protein uL14 (rplN), blocking formation of intersubunit bridge B8. Prevents association of the 30S and 50S ribosomal subunits and the formation of functional ribosomes, thus repressing translation. This chain is Ribosomal silencing factor RsfS, found in Chromobacterium violaceum (strain ATCC 12472 / DSM 30191 / JCM 1249 / CCUG 213 / NBRC 12614 / NCIMB 9131 / NCTC 9757 / MK).